We begin with the raw amino-acid sequence, 32 residues long: uncharacterized protein (32 aa).

A helical membrane pass occupies residues 3-23 (IGIIFPVVIFITAVVFLAWFF).

The protein resides in the cell inner membrane. This is an uncharacterized protein from Escherichia coli (strain K12).